Consider the following 442-residue polypeptide: Citrate transporter CitP (442 aa).

Transmembrane regions (helical) follow at residues 27 to 47 (ISGI…IAIS), 59 to 79 (IFAL…LPIF), 83 to 103 (LGGG…TNVI), 114 to 134 (FING…SSLF), 151 to 171 (VAFI…VIIG), 177 to 197 (AILY…IVPL), 209 to 229 (SAGI…LAII), 267 to 287 (YVQL…GTML), 293 to 313 (GINA…FGLL), 321 to 341 (VIMF…AGVG), 349 to 369 (VLLA…IVAI), 387 to 409 (AAIT…VLAA), and 421 to 441 (MGNR…VTFM).

This sequence belongs to the 2-hydroxycarboxylate transporter (2-HCT) (TC 2.A.24) family.

It is found in the cell membrane. The enzyme catalyses (R)-lactate(in) + citrate(out) = (R)-lactate(out) + citrate(in). It carries out the reaction (S)-lactate(in) + citrate(out) = (S)-lactate(out) + citrate(in). It catalyses the reaction citrate(in) + H(+)(in) = citrate(out) + H(+)(out). The transport of citrate is unaffected by the presence of citrate in the growth media. Secondary transporter involved in citrate metabolism. During cometabolism of citrate and glucose, catalyzes the uptake of divalent citrate into the cell coupled to the exit of monovalent lactate, the end product of glycolysis in L.lactis. The citrate/lactate exchange is electrogenic and results in the generation of a membrane potential. Plays an important role in resistance against lactate toxicity at low pH. In the absence of glucose, i.e. when no lactate is produced, CitP catalyzes the uptake of citrate in exchange with the citrate metabolism intermediates pyruvate and alpha-acetolactate, and the end product acetate. In the absence of glucose, CitP can also catalyze the proton-dependent transport of citrate. In vitro, shows a broad substrate specificity. Can transport a wide variety of mono- and dicarboxylates of the form X-CR(2)-COO(-), where X represents OH (2-hydroxy acid), O (2-keto acid), or H (acid) and R groups differ in size, hydrophobicity and composition. Many of the substrates are intermediates or products of amino acid metabolism, suggesting that CitP may have a broader physiological function than its role in citrate metabolism. In Lactococcus lactis subsp. lactis (Streptococcus lactis), this protein is Citrate transporter CitP.